Consider the following 581-residue polypeptide: MAVAGAAYREPLVHWCTQQLQKTFALDVSEEIIQYVLSIENAEEIREYVTDLLQGNEGKKGQFIEDLITKWQKNDQEFISDSFQQCLRKDEILDGQRSVDQLKRSRRKGRNKQEVPAFPEPDVAVEVKTPLDLAKAQESNNSVKKKTRFVNLYTREGQDKLAVLLPGRHPCDCLGQKHKLINNCLVCGRIVCEQEGSGPCLFCGSLVCTNEEQDILQRDSNKSQKLLKKLMSGAETSGKVDVSTKDLLPHQESRMKSGLEKAIKHKEKLLEFDRTSIRRTQVIDDESDYFASDSNQWLSKVEREMLQKREEELRELRHASRLSKKVTIDFAGRKILEDENPLAEYHSRLDETIQAIASGTLNQSLVTLDRSCEEPLGVLVNPNMYQASPQWVDNTGSTPQKKTSLSAGPRLEPSLHQHQLRIQDQEFQEGFDGGWCLSMHQPWASLLVRGIKRVEGRSWYTPHRGRLWIAATGKRPSPQEVSELQATYRLLRGKDVEFPNDYPSGCLLGCVDLIDCLSQKQFQEQFPDISQESDSSFVFICKNPQEMVVKFPIKGNPKIWKLDSKIHQGAKKGLMKQNKAV.

The residue at position 2 (Ala-2) is an N-acetylalanine. A disordered region spans residues 100-121 (DQLKRSRRKGRNKQEVPAFPEP). The segment at 167–219 (GRHPCDCLGQKHKLINNCLVCGRIVCEQEGSGPCLFCGSLVCTNEEQDILQRD) adopts a C4-type zinc-finger fold. Positions 200 to 300 (CLFCGSLVCT…ASDSNQWLSK (101 aa)) are mediates interaction with DDRGK1. Ser-276 carries the post-translational modification Phosphoserine. Tyr-289 carries the post-translational modification Phosphotyrosine. The segment at 300–400 (KVEREMLQKR…WVDNTGSTPQ (101 aa)) is mediates interaction with UFL1. Glycyl lysine isopeptide (Lys-Gly) (interchain with G-Cter in UFM1) cross-links involve residues Lys-324 and Lys-334. Residues 390–406 (QWVDNTGSTPQKKTSLS) are compositionally biased toward polar residues. The disordered stretch occupies residues 390 to 410 (QWVDNTGSTPQKKTSLSAGPR). Positions 437–531 (LSMHQPWASL…FQEQFPDISQ (95 aa)) constitute an ASCH domain.

As to quaternary structure, interacts with the thyroid hormone receptor/TR (via the ligand-binding domain); this interaction requires the presence of thyroid hormone. Interacts with the androgen receptor/AR; in an androgen, testosterone and dihydrotestosterone-dependent manner. Interacts with ESR1 (estrogen ligand-bound); competes with UFSP2. Interacts with UFSP2; competes with ligand-bound ESR1. Interacts with DDRGK1 and UFL1; the interaction with DDRGK1 is direct. Interacts with NCOA1. Interacts with EP300. Part of the ASC-1 complex, that contains TRIP4, ASCC1, ASCC2 and ASCC3. Identified in the RQT (ribosome quality control trigger) complex, that contains ASCC2, ASCC3 and TRIP4. Interacts with NEK6. Interacts with CSRP1. Interacts with ZCCHC4. Post-translationally, phosphorylated by NEK6. Polyufmylated by the UFM1-conjugating system composed of the enzymes UBA5, UFC1 and UFL1. Deufmylated by the protease UFSP2. Ufmylation of TRIP4 is promoted by ligand-bound nuclear receptors that compete with UFSP2 for interaction with TRIP4. Nuclear receptors-induced ufmylation promotes the recruitment of additional transcriptional coactivators like EP300 and NCOA1 and therefore the assembly of a coactivator complex facilitating nuclear receptor-mediated transcription. As to expression, ubiquitously expressed. Expressed in the spinal cord, brain, paraspinal ganglia, thyroid, and submandibular glands. Expressed at low level in all the muscles (at protein level) but with higher expression in axial than in limb muscles.

It localises to the nucleus. The protein resides in the cytoplasm. Its subcellular location is the cytosol. The protein localises to the cytoskeleton. It is found in the microtubule organizing center. It localises to the centrosome. Its function is as follows. Transcription coactivator which associates with nuclear receptors, transcriptional coactivators including EP300, CREBBP and NCOA1, and basal transcription factors like TBP and TFIIA to facilitate nuclear receptors-mediated transcription. May thereby play an important role in establishing distinct coactivator complexes under different cellular conditions. Plays a role in thyroid hormone receptor and estrogen receptor transactivation. Also involved in androgen receptor transactivation. Plays a pivotal role in the transactivation of NF-kappa-B, SRF and AP1. Acts as a mediator of transrepression between nuclear receptor and either AP1 or NF-kappa-B. May play a role in the development of neuromuscular junction. May play a role in late myogenic differentiation. Also functions as part of the RQC trigger (RQT) complex that activates the ribosome quality control (RQC) pathway, a pathway that degrades nascent peptide chains during problematic translation. This is Activating signal cointegrator 1 from Mus musculus (Mouse).